The primary structure comprises 232 residues: LexA repressor (232 aa).

A DNA-binding region (H-T-H motif) is located at residues 26–46 (FDEMKDALDLRSKSGIHRLIT). Residues serine 153 and lysine 191 each act as for autocatalytic cleavage activity in the active site.

The protein belongs to the peptidase S24 family. Homodimer.

The enzyme catalyses Hydrolysis of Ala-|-Gly bond in repressor LexA.. Represses a number of genes involved in the response to DNA damage (SOS response), including recA and lexA. In the presence of single-stranded DNA, RecA interacts with LexA causing an autocatalytic cleavage which disrupts the DNA-binding part of LexA, leading to derepression of the SOS regulon and eventually DNA repair. This Bradyrhizobium sp. (strain BTAi1 / ATCC BAA-1182) protein is LexA repressor.